Consider the following 521-residue polypeptide: Zinc finger and BTB domain-containing protein 18 (521 aa).

Residues 24 to 91 (CDCTVLVGDA…MYEGKLQFKD (68 aa)) enclose the BTB domain. Residues 190–230 (DSASIPQTGGEAETHTAAAGKTADSPCSSTGSLSHRSATSM) are disordered. Low complexity predominate over residues 197–212 (TGGEAETHTAAAGKTA). Over residues 214–230 (SPCSSTGSLSHRSATSM) the composition is skewed to polar residues. 4 C2H2-type zinc fingers span residues 369–391 (FMCPLCNKVFPSPHILQIHLSTH), 409–431 (PTCSLCGKTFSCMYTLKRHERTH), 437–459 (FTCTQCGKSFQYSHNLSRHAVVH), and 465–488 (HACKWCERRFTQSGDLYRHIRKFH).

This sequence belongs to the krueppel C2H2-type zinc-finger protein family. ZBTB18 subfamily.

It is found in the nucleus. Functionally, transcriptional repressor that plays a role in various developmental processes. Specifically binds the consensus DNA sequence 5'-[AC]ACATCTG[GT][AC]-3' which contains the E box core, and acts by recruiting chromatin remodeling multiprotein complexes. This chain is Zinc finger and BTB domain-containing protein 18 (zbtb18), found in Xenopus tropicalis (Western clawed frog).